Here is a 601-residue protein sequence, read N- to C-terminus: Glutathione-regulated potassium-efflux system protein KefB (601 aa).

Transmembrane regions (helical) follow at residues S4–A24, I29–F49, E55–L75, I87–M107, A115–M135, V152–G172, H177–G197, F207–G227, L230–L250, A262–L282, L284–V304, M324–A344, and A356–V376. In terms of domain architecture, RCK N-terminal spans K400–T519.

It belongs to the monovalent cation:proton antiporter 2 (CPA2) transporter (TC 2.A.37) family. KefB subfamily. Interacts with the regulatory subunit KefG.

The protein resides in the cell inner membrane. In terms of biological role, pore-forming subunit of a potassium efflux system that confers protection against electrophiles. Catalyzes K(+)/H(+) antiport. The sequence is that of Glutathione-regulated potassium-efflux system protein KefB from Shigella boydii serotype 18 (strain CDC 3083-94 / BS512).